The chain runs to 134 residues: F420-non-reducing hydrogenase vhu iron-sulfur subunit D (134 aa).

Residues Sec13 and Sec64 are each a non-standard amino acid (selenocysteine).

It belongs to the MvhD/VhuD family. In terms of assembly, the F420-non-reducing hydrogenase vhu is composed of four subunits; VhuA, VhuD, VhuG and VhuU. It depends on [2Fe-2S] cluster as a cofactor.

The sequence is that of F420-non-reducing hydrogenase vhu iron-sulfur subunit D (vhuD) from Methanocaldococcus jannaschii (strain ATCC 43067 / DSM 2661 / JAL-1 / JCM 10045 / NBRC 100440) (Methanococcus jannaschii).